The primary structure comprises 66 residues: Cold shock protein CspC (66 aa).

The region spanning 4–63 is the CSD domain; it reads GTVKWFNAEKGFGFIERENGDDVFVHFSAIQSDGFKSLDEGQKVSFDVEQGARGAQAANV.

The protein resides in the cytoplasm. The chain is Cold shock protein CspC (cspC) from Bacillus subtilis (strain 168).